A 372-amino-acid chain; its full sequence is Innexin-16 (372 aa).

Transmembrane regions (helical) follow at residues 31–51 (VVTTSILIAFSLLLFAKNYVG), 106–126 (VPFLLVIQALFFCVPRAFWII), 181–201 (LVMKLLILLNIVLQFFLLNSF), and 263–283 (IFIFLWFWFAFLLVATAGDFV). The N-linked (GlcNAc...) asparagine glycan is linked to N352.

This sequence belongs to the pannexin family.

It is found in the cell membrane. Its subcellular location is the cell junction. The protein localises to the gap junction. Structural component of the gap junctions. Required for signals downstream of defecation clock. The polypeptide is Innexin-16 (inx-16) (Caenorhabditis elegans).